The following is a 281-amino-acid chain: Probable short-chain type dehydrogenase/reductase blr2146 (281 aa).

Residue 10-34 (VVTGAGAGIGKACALAIAREGGRVV) participates in NAD(+) binding. Residue Ser-146 coordinates substrate. The active-site Proton acceptor is Tyr-159. Positions 261-281 (GNSRAARPAGETAEADAAPRC) are disordered.

The protein belongs to the short-chain dehydrogenases/reductases (SDR) family.

The sequence is that of Probable short-chain type dehydrogenase/reductase blr2146 from Bradyrhizobium diazoefficiens (strain JCM 10833 / BCRC 13528 / IAM 13628 / NBRC 14792 / USDA 110).